An 823-amino-acid polypeptide reads, in one-letter code: Polyadenylation and cleavage factor homolog 11 (823 aa).

A CID domain is found at 3–135 (SVESAARDYR…ELDMKINKLD (133 aa)). Disordered stretches follow at residues 142–176 (NPQTGRALRDDPQVMAPSQSRPAGNATSPAASTST), 188–301 (SSTP…KTLK), 340–395 (SSAP…LPAP), 570–643 (LPAP…EKRS), and 728–755 (WLTPRASDETNEQEADKPEEPLPGVASS). Composition is skewed to polar residues over residues 157 to 176 (APSQSRPAGNATSPAASTST) and 188 to 198 (SSTPGAASASK). Residues 200 to 226 (VVEKTKSPGTVNKEKQVKKEPKQDPLD) show a composition bias toward basic and acidic residues. Composition is skewed to low complexity over residues 227–242 (KLLPSSSASKTSSSPA) and 342–353 (APPFQHPQQHHP). Residues 374-390 (PQDPAPIVPVQAPPPQQ) show a composition bias toward pro residues. The segment covering 571-581 (PAPARSPSSPR) has biased composition (low complexity). Polar residues predominate over residues 609–624 (QPQQNARWGGANKQQN).

The polypeptide is Polyadenylation and cleavage factor homolog 11 (pcf-11) (Caenorhabditis elegans).